Consider the following 342-residue polypeptide: Methylthioribose-1-phosphate isomerase (342 aa).

Residues 49 to 51, Arg-86, and Gln-187 contribute to the substrate site; that span reads RGA. Catalysis depends on Asp-228, which acts as the Proton donor. 238–239 is a binding site for substrate; it reads NK.

This sequence belongs to the eIF-2B alpha/beta/delta subunits family. MtnA subfamily.

The catalysed reaction is 5-(methylsulfanyl)-alpha-D-ribose 1-phosphate = 5-(methylsulfanyl)-D-ribulose 1-phosphate. It participates in amino-acid biosynthesis; L-methionine biosynthesis via salvage pathway; L-methionine from S-methyl-5-thio-alpha-D-ribose 1-phosphate: step 1/6. Functionally, catalyzes the interconversion of methylthioribose-1-phosphate (MTR-1-P) into methylthioribulose-1-phosphate (MTRu-1-P). This is Methylthioribose-1-phosphate isomerase from Citrobacter koseri (strain ATCC BAA-895 / CDC 4225-83 / SGSC4696).